Consider the following 240-residue polypeptide: UDP-2,3-diacylglucosamine hydrolase (240 aa).

Asp-8, His-10, Asp-41, Asn-79, and His-114 together coordinate Mn(2+). 79-80 contacts substrate; sequence NR. Substrate is bound by residues Asp-122, Ser-160, Asn-164, Lys-167, and His-195. Positions 195 and 197 each coordinate Mn(2+).

This sequence belongs to the LpxH family. Requires Mn(2+) as cofactor.

The protein localises to the cell inner membrane. It catalyses the reaction UDP-2-N,3-O-bis[(3R)-3-hydroxytetradecanoyl]-alpha-D-glucosamine + H2O = 2-N,3-O-bis[(3R)-3-hydroxytetradecanoyl]-alpha-D-glucosaminyl 1-phosphate + UMP + 2 H(+). It participates in glycolipid biosynthesis; lipid IV(A) biosynthesis; lipid IV(A) from (3R)-3-hydroxytetradecanoyl-[acyl-carrier-protein] and UDP-N-acetyl-alpha-D-glucosamine: step 4/6. In terms of biological role, hydrolyzes the pyrophosphate bond of UDP-2,3-diacylglucosamine to yield 2,3-diacylglucosamine 1-phosphate (lipid X) and UMP by catalyzing the attack of water at the alpha-P atom. Involved in the biosynthesis of lipid A, a phosphorylated glycolipid that anchors the lipopolysaccharide to the outer membrane of the cell. The protein is UDP-2,3-diacylglucosamine hydrolase of Escherichia fergusonii (strain ATCC 35469 / DSM 13698 / CCUG 18766 / IAM 14443 / JCM 21226 / LMG 7866 / NBRC 102419 / NCTC 12128 / CDC 0568-73).